Consider the following 252-residue polypeptide: Homeobox protein EMX2 (252 aa).

Positions P154–K213 form a DNA-binding region, homeobox. The interval Q212–D252 is disordered. Positions K224–R233 are enriched in basic residues.

The protein belongs to the EMX homeobox family. In terms of assembly, interacts with translation initiation factor EIF4E. In terms of tissue distribution, cerebral cortex.

It is found in the nucleus. Its subcellular location is the cell projection. The protein resides in the axon. Transcription factor, which in cooperation with EMX1, acts to generate the boundary between the roof and archipallium in the developing brain. May function in combination with OTX1/2 to specify cell fates in the developing central nervous system. In the inner ear, it controls the distribution of GPR156 at hair cell boundaries, and regulates the organization of stereociliary bundles in opposite orientations across the line of polarity reversal (LPR). The protein is Homeobox protein EMX2 (EMX2) of Homo sapiens (Human).